The primary structure comprises 315 residues: Type II restriction enzyme AvaI (315 aa).

It carries out the reaction Endonucleolytic cleavage of DNA to give specific double-stranded fragments with terminal 5'-phosphates.. Functionally, a P subtype restriction enzyme that recognizes the double-stranded sequence 5'-CYCGRG-3' and cleaves after C-1. The sequence is that of Type II restriction enzyme AvaI from Anabaena variabilis.